The primary structure comprises 73 residues: Large ribosomal subunit protein eL20 (73 aa).

This sequence belongs to the eukaryotic ribosomal protein eL20 family. Part of the 50S ribosomal subunit. Binds 23S rRNA.

The polypeptide is Large ribosomal subunit protein eL20 (Methanococcus aeolicus (strain ATCC BAA-1280 / DSM 17508 / OCM 812 / Nankai-3)).